We begin with the raw amino-acid sequence, 662 residues long: DNA ligase (662 aa).

Residues 32-36 (DAEYD), 81-82 (SL), and glutamate 112 each bind NAD(+). Catalysis depends on lysine 114, which acts as the N6-AMP-lysine intermediate. 4 residues coordinate NAD(+): arginine 135, glutamate 170, lysine 286, and lysine 310. Residues cysteine 402, cysteine 405, cysteine 420, and cysteine 425 each contribute to the Zn(2+) site. The BRCT domain maps to 583–662 (PKGGPLTGST…AELHAMLRGE (80 aa)).

Belongs to the NAD-dependent DNA ligase family. LigA subfamily. Mg(2+) serves as cofactor. Requires Mn(2+) as cofactor.

It carries out the reaction NAD(+) + (deoxyribonucleotide)n-3'-hydroxyl + 5'-phospho-(deoxyribonucleotide)m = (deoxyribonucleotide)n+m + AMP + beta-nicotinamide D-nucleotide.. Its function is as follows. DNA ligase that catalyzes the formation of phosphodiester linkages between 5'-phosphoryl and 3'-hydroxyl groups in double-stranded DNA using NAD as a coenzyme and as the energy source for the reaction. It is essential for DNA replication and repair of damaged DNA. The sequence is that of DNA ligase from Solibacter usitatus (strain Ellin6076).